We begin with the raw amino-acid sequence, 214 residues long: Pyridoxine/pyridoxamine 5'-phosphate oxidase (214 aa).

Substrate is bound by residues 8–11 and K67; that span reads RKSY. FMN contacts are provided by residues 62 to 67, 77 to 78, K84, and Q106; these read RVVLLK and YT. Residues Y124, R128, and S132 each contribute to the substrate site. Residues 141–142 and W186 contribute to the FMN site; that span reads QS. 192-194 contributes to the substrate binding site; that stretch reads RLH. R196 contacts FMN.

The protein belongs to the pyridoxamine 5'-phosphate oxidase family. As to quaternary structure, homodimer. Requires FMN as cofactor.

The enzyme catalyses pyridoxamine 5'-phosphate + O2 + H2O = pyridoxal 5'-phosphate + H2O2 + NH4(+). It catalyses the reaction pyridoxine 5'-phosphate + O2 = pyridoxal 5'-phosphate + H2O2. It participates in cofactor metabolism; pyridoxal 5'-phosphate salvage; pyridoxal 5'-phosphate from pyridoxamine 5'-phosphate: step 1/1. Its pathway is cofactor metabolism; pyridoxal 5'-phosphate salvage; pyridoxal 5'-phosphate from pyridoxine 5'-phosphate: step 1/1. In terms of biological role, catalyzes the oxidation of either pyridoxine 5'-phosphate (PNP) or pyridoxamine 5'-phosphate (PMP) into pyridoxal 5'-phosphate (PLP). The chain is Pyridoxine/pyridoxamine 5'-phosphate oxidase from Flavobacterium johnsoniae (strain ATCC 17061 / DSM 2064 / JCM 8514 / BCRC 14874 / CCUG 350202 / NBRC 14942 / NCIMB 11054 / UW101) (Cytophaga johnsonae).